Consider the following 265-residue polypeptide: Arcelin-2 (265 aa).

The signal sequence occupies residues 1-21; sequence MASSNLLTLALFLVLLTHANS. Residues Asn33 and Asn89 are each glycosylated (N-linked (GlcNAc...) asparagine). Cys165 and Cys201 are oxidised to a cystine.

This sequence belongs to the leguminous lectin family.

Functionally, seed storage. This carbohydrate-binding lectin has toxic effects on bean bruchid pests. Antibiosis properties of legume lectins are proposed to be due to the lysis of epithelial cells of the intestine by binding to the carbohydrate moieties of these proteins. The sequence is that of Arcelin-2 (ARC2) from Phaseolus vulgaris (Kidney bean).